A 92-amino-acid polypeptide reads, in one-letter code: Small ribosomal subunit protein uS19 (92 aa).

The protein belongs to the universal ribosomal protein uS19 family.

Protein S19 forms a complex with S13 that binds strongly to the 16S ribosomal RNA. This Variovorax paradoxus (strain S110) protein is Small ribosomal subunit protein uS19.